The chain runs to 379 residues: Putative 8-amino-7-oxononanoate synthase (379 aa).

Residue arginine 21 coordinates substrate. A pyridoxal 5'-phosphate-binding site is contributed by 97 to 98 (GY). Histidine 122 contacts substrate. Residues serine 169, 194–197 (DDAH), and 223–226 (TLSK) contribute to the pyridoxal 5'-phosphate site. Position 226 is an N6-(pyridoxal phosphate)lysine (lysine 226). Threonine 340 provides a ligand contact to substrate.

This sequence belongs to the class-II pyridoxal-phosphate-dependent aminotransferase family. BioF subfamily. In terms of assembly, homodimer. Pyridoxal 5'-phosphate serves as cofactor.

The catalysed reaction is 6-carboxyhexanoyl-[ACP] + L-alanine + H(+) = (8S)-8-amino-7-oxononanoate + holo-[ACP] + CO2. The protein operates within cofactor biosynthesis; biotin biosynthesis. Its function is as follows. Catalyzes the decarboxylative condensation of pimeloyl-[acyl-carrier protein] and L-alanine to produce 8-amino-7-oxononanoate (AON), [acyl-carrier protein], and carbon dioxide. In Bacillus licheniformis (strain ATCC 14580 / DSM 13 / JCM 2505 / CCUG 7422 / NBRC 12200 / NCIMB 9375 / NCTC 10341 / NRRL NRS-1264 / Gibson 46), this protein is Putative 8-amino-7-oxononanoate synthase (bioF).